We begin with the raw amino-acid sequence, 496 residues long: Glutamyl-tRNA(Gln) amidotransferase subunit A (496 aa).

Residues Lys-75 and Ser-150 each act as charge relay system in the active site. Ser-174 functions as the Acyl-ester intermediate in the catalytic mechanism.

It belongs to the amidase family. GatA subfamily. Heterotrimer of A, B and C subunits.

The enzyme catalyses L-glutamyl-tRNA(Gln) + L-glutamine + ATP + H2O = L-glutaminyl-tRNA(Gln) + L-glutamate + ADP + phosphate + H(+). Allows the formation of correctly charged Gln-tRNA(Gln) through the transamidation of misacylated Glu-tRNA(Gln) in organisms which lack glutaminyl-tRNA synthetase. The reaction takes place in the presence of glutamine and ATP through an activated gamma-phospho-Glu-tRNA(Gln). This chain is Glutamyl-tRNA(Gln) amidotransferase subunit A, found in Burkholderia ambifaria (strain ATCC BAA-244 / DSM 16087 / CCUG 44356 / LMG 19182 / AMMD) (Burkholderia cepacia (strain AMMD)).